The chain runs to 259 residues: Type III pantothenate kinase (259 aa).

6–13 serves as a coordination point for ATP; sequence DVGNTNCT. 107–110 lines the substrate pocket; that stretch reads GSDR. Asp109 (proton acceptor) is an active-site residue. Asp129 provides a ligand contact to K(+). Thr132 contributes to the ATP binding site. Thr184 lines the substrate pocket.

This sequence belongs to the type III pantothenate kinase family. As to quaternary structure, homodimer. NH4(+) is required as a cofactor. K(+) serves as cofactor.

Its subcellular location is the cytoplasm. It catalyses the reaction (R)-pantothenate + ATP = (R)-4'-phosphopantothenate + ADP + H(+). It functions in the pathway cofactor biosynthesis; coenzyme A biosynthesis; CoA from (R)-pantothenate: step 1/5. Its function is as follows. Catalyzes the phosphorylation of pantothenate (Pan), the first step in CoA biosynthesis. This is Type III pantothenate kinase from Listeria monocytogenes serotype 4b (strain CLIP80459).